The chain runs to 98 residues: Large ribosomal subunit protein uL23 (98 aa).

This sequence belongs to the universal ribosomal protein uL23 family. As to quaternary structure, part of the 50S ribosomal subunit. Contacts protein L29, and trigger factor when it is bound to the ribosome.

Functionally, one of the early assembly proteins it binds 23S rRNA. One of the proteins that surrounds the polypeptide exit tunnel on the outside of the ribosome. Forms the main docking site for trigger factor binding to the ribosome. The protein is Large ribosomal subunit protein uL23 of Roseobacter denitrificans (strain ATCC 33942 / OCh 114) (Erythrobacter sp. (strain OCh 114)).